The primary structure comprises 137 residues: uncharacterized protein (137 aa).

Transmembrane regions (helical) follow at residues E5 to I25, I79 to Y99, and F109 to W129.

Belongs to the MAPEG family.

The protein resides in the cell membrane. This is an uncharacterized protein from Synechocystis sp. (strain ATCC 27184 / PCC 6803 / Kazusa).